The primary structure comprises 383 residues: Forkhead box protein I3-B (383 aa).

The segment covering 1–12 has biased composition (polar residues); the sequence is MTSYESQGQSPT. Disordered regions lie at residues 1–55, 215–277, and 317–348; these read MTSY…YELG, DNGN…PCLS, and TTGF…SPSH. A compositionally biased stretch (low complexity) spans 25–35; sequence PPELSLYSDSY. A DNA-binding region (fork-head) is located at residues 130–224; it reads RPPYSYSALI…DNGNFRRKRK (95 aa). Residues 220–226 carry the Nuclear localization signal motif; that stretch reads RRKRKRK. The segment covering 234–249 has biased composition (low complexity); sequence SSSGGNESGDSNGRGS. Positions 250–277 are enriched in polar residues; sequence PKSQSIDISTSPEKGPSPASTGPSPCLS. Low complexity predominate over residues 317 to 330; that stretch reads TTGFSTFTPSTTVS.

As to expression, expressed in ionocyte precursors.

The protein resides in the nucleus. Transcription factor required for epithelial cell differentiation. Involved in specification of skin ionocytes from epidermal precursors. This Danio rerio (Zebrafish) protein is Forkhead box protein I3-B.